Consider the following 152-residue polypeptide: Deoxyuridine 5'-triphosphate nucleotidohydrolase (152 aa).

Residues 72-74, N85, and 89-91 contribute to the substrate site; these read RSG and TVD.

It belongs to the dUTPase family. Requires Mg(2+) as cofactor.

The enzyme catalyses dUTP + H2O = dUMP + diphosphate + H(+). It participates in pyrimidine metabolism; dUMP biosynthesis; dUMP from dCTP (dUTP route): step 2/2. In terms of biological role, this enzyme is involved in nucleotide metabolism: it produces dUMP, the immediate precursor of thymidine nucleotides and it decreases the intracellular concentration of dUTP so that uracil cannot be incorporated into DNA. This Nitrobacter hamburgensis (strain DSM 10229 / NCIMB 13809 / X14) protein is Deoxyuridine 5'-triphosphate nucleotidohydrolase.